Reading from the N-terminus, the 298-residue chain is N-acetylmuramic acid 6-phosphate etherase (298 aa).

The region spanning 55-218 (IHAQVSGGGR…STGLMIKSGK (164 aa)) is the SIS domain. E83 acts as the Proton donor in catalysis. E114 is a catalytic residue.

Belongs to the GCKR-like family. MurNAc-6-P etherase subfamily. Homodimer.

The catalysed reaction is N-acetyl-D-muramate 6-phosphate + H2O = N-acetyl-D-glucosamine 6-phosphate + (R)-lactate. It participates in amino-sugar metabolism; 1,6-anhydro-N-acetylmuramate degradation. The protein operates within amino-sugar metabolism; N-acetylmuramate degradation. Its pathway is cell wall biogenesis; peptidoglycan recycling. Specifically catalyzes the cleavage of the D-lactyl ether substituent of MurNAc 6-phosphate, producing GlcNAc 6-phosphate and D-lactate. Together with AnmK, is also required for the utilization of anhydro-N-acetylmuramic acid (anhMurNAc) either imported from the medium or derived from its own cell wall murein, and thus plays a role in cell wall recycling. This chain is N-acetylmuramic acid 6-phosphate etherase, found in Escherichia fergusonii (strain ATCC 35469 / DSM 13698 / CCUG 18766 / IAM 14443 / JCM 21226 / LMG 7866 / NBRC 102419 / NCTC 12128 / CDC 0568-73).